Consider the following 203-residue polypeptide: ATP-dependent Clp protease proteolytic subunit (203 aa).

The active-site Nucleophile is the serine 101. Histidine 126 is an active-site residue.

This sequence belongs to the peptidase S14 family. Component of the chloroplastic Clp protease core complex.

Its subcellular location is the plastid. It is found in the chloroplast stroma. It catalyses the reaction Hydrolysis of proteins to small peptides in the presence of ATP and magnesium. alpha-casein is the usual test substrate. In the absence of ATP, only oligopeptides shorter than five residues are hydrolyzed (such as succinyl-Leu-Tyr-|-NHMec, and Leu-Tyr-Leu-|-Tyr-Trp, in which cleavage of the -Tyr-|-Leu- and -Tyr-|-Trp bonds also occurs).. Functionally, cleaves peptides in various proteins in a process that requires ATP hydrolysis. Has a chymotrypsin-like activity. Plays a major role in the degradation of misfolded proteins. This is ATP-dependent Clp protease proteolytic subunit from Marchantia polymorpha (Common liverwort).